A 282-amino-acid chain; its full sequence is MSGFCVLGCGTMGKALLTGIFDSIAENGNDVSDEIIIPNKFYACVKFPKEKEDVQKLFGDRVKVVMGAKENAEMAAISNVLLLSCKPQAAEDVLNSPKMKEALKGKLILSILAGKTISSLQSMLDESTRVIRIMPNTASRIRESMSVICPGPNATEEDIKFAEWVFNGIGRSMKLPEKLIDAATAVCGSGPAFVATMIEAMTDGGVMMGIPFPQAQELAAQTMVGTGRMVLQGQHPAMIRNDVSTPAGCTISGLLALEDGKIRSTIARGIEQATKTASGLGK.

The protein belongs to the pyrroline-5-carboxylate reductase family.

The catalysed reaction is L-proline + NADP(+) = (S)-1-pyrroline-5-carboxylate + NADPH + 2 H(+). The enzyme catalyses L-proline + NAD(+) = (S)-1-pyrroline-5-carboxylate + NADH + 2 H(+). Its pathway is amino-acid biosynthesis; L-proline biosynthesis; L-proline from L-glutamate 5-semialdehyde: step 1/1. This is Pyrroline-5-carboxylate reductase (pro3) from Schizosaccharomyces pombe (strain 972 / ATCC 24843) (Fission yeast).